Consider the following 172-residue polypeptide: Translationally-controlled tumor protein homolog (172 aa).

The TCTP domain occupies 1–172 (MIIFKDLLTG…FKHGLDEEKV (172 aa)).

This sequence belongs to the TCTP family. In terms of tissue distribution, expressed by the venom gland.

The protein localises to the secreted. Its function is as follows. Venom protein that causes edema, enhances vascular permeability and is likely related to the inflammatory activity of the venom. This is Translationally-controlled tumor protein homolog from Loxosceles intermedia (Brown spider).